The following is a 254-amino-acid chain: MEEQVFASKKVGVLPARWGSVRFTGKPLANILGKSLIQRTYENISQSTTLDKVVVATDNQRIMDHVLDFGGDCVMTSPECANGTERTAEAISRYFPEAEIIVNIQGDEPCLQHTVVDTLVRKLEESPEIQVVTPAAKTTDSHEILTNQKVKCVFDKNGKALYFSRSPIPHILKKETPIYLHIGVYAFRRNALFSYIESTPTSLSQAEDLEQLRILEHGGSIHICVVEAKSPSVDYPEDINKVEKYLTCHSSASF.

It belongs to the KdsB family.

The protein localises to the cytoplasm. The enzyme catalyses 3-deoxy-alpha-D-manno-oct-2-ulosonate + CTP = CMP-3-deoxy-beta-D-manno-octulosonate + diphosphate. The protein operates within nucleotide-sugar biosynthesis; CMP-3-deoxy-D-manno-octulosonate biosynthesis; CMP-3-deoxy-D-manno-octulosonate from 3-deoxy-D-manno-octulosonate and CTP: step 1/1. Its pathway is bacterial outer membrane biogenesis; lipopolysaccharide biosynthesis. Its function is as follows. Activates KDO (a required 8-carbon sugar) for incorporation into bacterial lipopolysaccharide in Gram-negative bacteria. The protein is 3-deoxy-manno-octulosonate cytidylyltransferase of Chlamydia felis (strain Fe/C-56) (Chlamydophila felis).